The sequence spans 63 residues: Large ribosomal subunit protein uL29 (63 aa).

The protein belongs to the universal ribosomal protein uL29 family.

This is Large ribosomal subunit protein uL29 from Bdellovibrio bacteriovorus (strain ATCC 15356 / DSM 50701 / NCIMB 9529 / HD100).